Consider the following 321-residue polypeptide: Aldose reductase C (321 aa).

22-31 (GNQIPSIGLG) serves as a coordination point for NADP(+). Residue Tyr-62 is the Proton donor of the active site. His-124 serves as a coordination point for substrate. 227-281 (SPLGQGKCDFFSNKILKSIAGKYKKSVANVIFKWLNQRGIAAIPKSGNHSRIIEN) is an NADP(+) binding site.

It belongs to the aldo/keto reductase family.

The catalysed reaction is an alditol + NAD(+) = an aldose + NADH + H(+). It catalyses the reaction an alditol + NADP(+) = an aldose + NADPH + H(+). Its function is as follows. Catalyzes the NADPH-dependent reduction of a wide variety of carbonyl-containing compounds to their corresponding alcohols with a broad range of catalytic efficiencies. This Dictyostelium discoideum (Social amoeba) protein is Aldose reductase C (alrC).